Consider the following 1937-residue polypeptide: MSASSDAEMAVFGEAAPYLRKSEKERIEAQNKPFDAKTSVFVAEPKESYVKSTIQSKEGGKVTVKTEGGATLTVREDQVFPMNPPKYDKIEDMAMMTHLHEPGVLYNLKERYAAWMIYTYSGLFCVTVNPYKWLPVYKPEVVAAYRGKKRQEAPPHIFSISDNAYQFMLTDRENQSILITGESGAGKTVNTKRVIQYFATIAVTGEKKKDESGKMQGTLEDQIISANPLLEAFGNAKTVRNDNSSRFGKFIRIHFGTTGKLASADIETYLLEKSRVTFQLKAERSYHIFYQITSNKKPDLIEMLLITTNPYDYAFVSQGEITVPSIDDQEELMATDSAIDILGFTPEEKVSIYKLTGAVMHYGNMKFKQKQREEQAEPDGTEVADKAAYLQSLNSADLLKALCYPRVKVGNEYVTKGQTVQQVYNAVGALAKAVYEKMFLWMVTRINQQLDTKQPRQYFIGVLDIAGFEIFDFNSLEQLCINFTNEKLQQFFNHHMFVLEQEEYKKEGIEWTFIDFGMDLAACIELIEKPLGIFSILEEECMFPKATDTSFKNKLYDQHLGKSANFQKPKVVKGKAEAHFSLIHYAGTVDYNITGWLDKNKDPLNDTVVGLYQKSAMKTLASLFSTYASAEADSSAKKGAKKKGSSFQTVSALFRENLNKLMTNLRSTHPHFVRCIIPNETKTPGAMEHELVLHQLRCNGVLEGIRICRKGFPSRILYGDFKQRYKVLNASAIPEGQFIDSKKASEKLLASIDIDHTQYKFGHTKVFFKAGLLGLLEEMRDEKLAQIITRTQAVCRGFLMRVEYQKMLQRREALFCIQYNVRAFMNVKHWPWMKLFFKIKPLLKSAETEKEMATMKEEFQKTKDELAKSEAKRKELEEKMVTLLKEKNDLQLQVQSEADSLADAEERCEQLIKNKIQLEAKIKEVTERAEEEEEINAELTAKKRKLEDECSELKKDIDDLELTLAKVEKEKHATENKVKNLTEEMAGLDETIAKLSKEKKALQETHQQTLDDLQAEEDKVNILTKAKTKLEQQVDDLEGSLEQEKKLRMDLERAKRKLEGDLKLAQESTMDMENDKQQLDEKLEKKEFEISNLISKIEDEQAVEIQLQKKIKELQARIEELGEEIEAERASRAKAEKQRSDLSRELEEISERLEEAGGATSAQVELNKKREAEFQKLRRDLEEATLQHEAMVAALRKKHADSMAELGEQIDNLQRVKQKLEKEKSELKMETDDLSSNAEAISKAKGNLEKMCRSLEDQVSELKTKEEEQQRLINDLTAQRARLQTEAGEYSRQLDEKDALVSQLSRSKQASTQQIEELKHQLEEETKAKNALAHALQSSRHDCDLLREQYEEEQEGKAELQRALSKANSEVAQWRTKYETDAIQRTEELEEAKKKLAQRLQEAEEHVEAVNAKCASLEKTKQRLQNEVEDLMLDVERSNAACAALDKKQRNFDKVLSEWKQKYEETQAELEASQKESRSLSTELFKVKNVYEESLDQLETLRRENKNLQQEISDLTEQIAEGGKQIHELEKIKKQVEQEKCEIQAALEEAEASLEHEEGKILRIQLELNQVKSEVDRKIAEKDEEIDQLKRNHTRVVETMQSTLDAEIRSRNDALRVKKKMEGDLNEMEIQLNHANRLAAESLRNYRNTQGILKETQLHLDDALRGQEDLKEQLAIVERRANLLQAEIEELWATLEQTERSRKIAEQELLDASERVQLLHTQNTSLINTKKKLENDVSQLQSEVEEVIQESRNAEEKAKKAITDAAMMAEELKKEQDTSAHLERMKKNLEQTVKDLQHRLDEAEQLALKGGKKQIQKLEARVRELEGEVENEQKRNAEAVKGLRKHERRVKELTYQTEEDRKNVLRLQDLVDKLQAKVKSYKRQAEEAEEQSNANLSKFRKLQHELEEAEERADIAESQVNKLRVKSREVHTKISAE.

Residues 35 to 84 enclose the Myosin N-terminal SH3-like domain; it reads DAKTSVFVAEPKESYVKSTIQSKEGGKVTVKTEGGATLTVREDQVFPMNP. Phosphothreonine occurs at positions 66 and 71. A Myosin motor domain is found at 88-781; that stretch reads DKIEDMAMMT…LLGLLEEMRD (694 aa). The residue at position 132 (K132) is an N6,N6,N6-trimethyllysine. 181–188 contacts ATP; that stretch reads GESGAGKT. Y389 carries the post-translational modification Phosphotyrosine. S392 bears the Phosphoserine mark. Residue T419 is modified to Phosphothreonine. At Y424 the chain carries Phosphotyrosine. S625 carries the post-translational modification Phosphoserine. The actin-binding stretch occupies residues 658–680; sequence LNKLMTNLRSTHPHFVRCIIPNE. Residue H756 is modified to Pros-methylhistidine. Residues 760-774 are actin-binding; the sequence is KFGHTKVFFKAGLLG. The IQ domain maps to 781–813; it reads DEKLAQIITRTQAVCRGFLMRVEYQKMLQRREA. A coiled-coil region spans residues 842 to 1937; it reads LLKSAETEKE…REVHTKISAE (1096 aa). Phosphoserine is present on residues S1091 and S1095. The segment at 1126 to 1146 is disordered; the sequence is EAERASRAKAEKQRSDLSREL. Residues 1127 to 1146 show a composition bias toward basic and acidic residues; that stretch reads AERASRAKAEKQRSDLSREL. 4 positions are modified to phosphoserine: S1161, S1236, S1242, and S1260. Phosphothreonine is present on residues T1264 and T1285. Residues S1291, S1302, and S1305 each carry the phosphoserine modification. The residue at position 1463 (Y1463) is a Phosphotyrosine. A Phosphothreonine modification is found at T1466. Position 1473 is a phosphoserine (S1473). Y1491 bears the Phosphotyrosine mark. At S1494 the chain carries Phosphoserine. T1500 carries the phosphothreonine modification. Position 1513 is a phosphoserine (S1513). The residue at position 1516 (T1516) is a Phosphothreonine. Phosphoserine is present on residues S1553, S1573, S1602, S1713, and S1725. T1729 carries the post-translational modification Phosphothreonine. S1738 is subject to Phosphoserine.

It belongs to the TRAFAC class myosin-kinesin ATPase superfamily. Myosin family. As to quaternary structure, muscle myosin is a hexameric protein that consists of 2 heavy chain subunits (MHC), 2 alkali light chain subunits (MLC) and 2 regulatory light chain subunits (MLC-2).

The protein resides in the cytoplasm. Its subcellular location is the myofibril. Muscle contraction. The polypeptide is Myosin-8 (MYH8) (Homo sapiens (Human)).